The following is a 250-amino-acid chain: Lymphotoxin-beta (250 aa).

Residues 1 to 26 are Cytoplasmic-facing; that stretch reads MGAPGLETRAGGPNGKSYLLLASVGA. Residues 27–47 form a helical; Signal-anchor for type II membrane protein membrane-spanning segment; sequence AVLGTLLLSVPITVLTVLALM. Topologically, residues 48-250 are extracellular; sequence PQEQGGQVAD…KTFFGAVMVG (203 aa). Positions 87–249 constitute a THD domain; the sequence is PAAHLIGIAK…GKTFFGAVMV (163 aa). Asparagine 228 is a glycosylation site (N-linked (GlcNAc...) asparagine).

Belongs to the tumor necrosis factor family. Heterotrimer of either two LTB and one LTA subunits or (less prevalent) two LTA and one LTB subunits.

Its subcellular location is the membrane. Cytokine that binds to LTBR/TNFRSF3. May play a specific role in immune response regulation. Provides the membrane anchor for the attachment of the heterotrimeric complex to the cell surface. This chain is Lymphotoxin-beta (LTB), found in Notamacropus eugenii (Tammar wallaby).